The sequence spans 380 residues: Chaperone protein DnaJ (380 aa).

In terms of domain architecture, J spans Asp5–Gly70. The segment at Gly140–Thr218 adopts a CR-type zinc-finger fold. Zn(2+) contacts are provided by Cys153, Cys156, Cys170, Cys173, Cys192, Cys195, Cys206, and Cys209. CXXCXGXG motif repeat units lie at residues Cys153–Gly160, Cys170–Gly177, Cys192–Gly199, and Cys206–Gly213.

Belongs to the DnaJ family. In terms of assembly, homodimer. Requires Zn(2+) as cofactor.

It is found in the cytoplasm. Functionally, participates actively in the response to hyperosmotic and heat shock by preventing the aggregation of stress-denatured proteins and by disaggregating proteins, also in an autonomous, DnaK-independent fashion. Unfolded proteins bind initially to DnaJ; upon interaction with the DnaJ-bound protein, DnaK hydrolyzes its bound ATP, resulting in the formation of a stable complex. GrpE releases ADP from DnaK; ATP binding to DnaK triggers the release of the substrate protein, thus completing the reaction cycle. Several rounds of ATP-dependent interactions between DnaJ, DnaK and GrpE are required for fully efficient folding. Also involved, together with DnaK and GrpE, in the DNA replication of plasmids through activation of initiation proteins. The sequence is that of Chaperone protein DnaJ from Paraburkholderia xenovorans (strain LB400).